The following is a 470-amino-acid chain: Putative multidrug resistance protein MdtD (470 aa).

The Periplasmic segment spans residues 1 to 11 (MTELPDNTRWQ). The helical transmembrane segment at 12–32 (LWIVAFGFFMQSLDTTIVNTA) threads the bilayer. The Cytoplasmic portion of the chain corresponds to 33 to 48 (LPSMAKSLGESPLHMH). The chain crosses the membrane as a helical span at residues 49-69 (MVVVSYVLTVAVMLPASGWLA). The Periplasmic portion of the chain corresponds to 70-76 (DKIGVRN). A helical transmembrane segment spans residues 77–97 (IFFAAIVLFTLGSLFCALSGT). Residues 98 to 101 (LNQL) lie on the Cytoplasmic side of the membrane. The helical transmembrane segment at 102–124 (VLARVLQGVGGAMMVPVGRLTVM) threads the bilayer. Residues 125 to 137 (KIVPRAQYMAAMT) are Periplasmic-facing. Residues 138–158 (FVTLPGQIGPLLGPALGGVLV) form a helical membrane-spanning segment. Topologically, residues 159-164 (EYASWH) are cytoplasmic. A helical transmembrane segment spans residues 165 to 185 (WIFLINIPVGIVGAMATFMLM). The Periplasmic segment spans residues 186–196 (PNYTIETRRFD). Residues 197–217 (LPGFLLLAIGMAVLTLALDGS) form a helical membrane-spanning segment. Residues 218-224 (KSMGISP) lie on the Cytoplasmic side of the membrane. Residues 225-245 (WTLAGLAAGGAAAILLYLFHA) traverse the membrane as a helical segment. Residues 246–262 (KKNSGALFSLRLFRTPT) lie on the Periplasmic side of the membrane. Residues 263–283 (FSLGLLGSFAGRIGSGMLPFM) traverse the membrane as a helical segment. The Cytoplasmic segment spans residues 284–285 (TP). Residues 286 to 306 (VFLQIGLGFSPFHAGLMMIPM) form a helical membrane-spanning segment. Over 307 to 341 (VLGSMGMKRIVVQIVNRFGYRRVLVATTLGLALVS) the chain is Periplasmic. The chain crosses the membrane as a helical span at residues 342 to 362 (LLFMSVALLGWYYLLPLVLLL). Topologically, residues 363–395 (QGMVNSARFSSMNTLTLKDLPDTLASSGNSLLS) are cytoplasmic. A helical membrane pass occupies residues 396–416 (MIMQLSMSIGVTIAGMLLGMF). Over 417–430 (GQQHIGIDSSATHH) the chain is Periplasmic. A helical membrane pass occupies residues 431–451 (VFMYTWLCMAVIIALPAIIFA). At 452-470 (RVPNDTQQNMVISRRKRSL) the chain is on the cytoplasmic side.

The protein belongs to the major facilitator superfamily. TCR/Tet family.

Its subcellular location is the cell inner membrane. This is Putative multidrug resistance protein MdtD from Salmonella agona (strain SL483).